Consider the following 473-residue polypeptide: Probable dipeptidase (473 aa).

C10 is an active-site residue.

The protein belongs to the peptidase C69 family.

It catalyses the reaction an L-aminoacyl-L-amino acid + H2O = 2 an L-alpha-amino acid. This chain is Probable dipeptidase, found in Latilactobacillus sakei (Lactobacillus sakei).